A 385-amino-acid polypeptide reads, in one-letter code: Serine/threonine-protein kinase H2 (385 aa).

A Protein kinase domain is found at 63-320; sequence YDIKALIGTG…AGQALDHPWV (258 aa). Residues 69–77 and K92 contribute to the ATP site; that span reads IGTGSFSRV. Positions 342–367 are disordered; it reads QRASPHSQSPGSAQSSKSHYSHKSRH. Positions 344-359 are enriched in low complexity; the sequence is ASPHSQSPGSAQSSKS.

This sequence belongs to the protein kinase superfamily. CAMK Ser/Thr protein kinase family.

The enzyme catalyses L-seryl-[protein] + ATP = O-phospho-L-seryl-[protein] + ADP + H(+). The catalysed reaction is L-threonyl-[protein] + ATP = O-phospho-L-threonyl-[protein] + ADP + H(+). The polypeptide is Serine/threonine-protein kinase H2 (PSKH2) (Homo sapiens (Human)).